The sequence spans 184 residues: MGLWDALLNWLRSLFFKQEMELSLIGLQNAGKTSLVNVVATGGYSEDMIPTVGFNMRKVTKGSVTIKLWDLGGQPRFRSMWERYCRSVSAIVYVVDAADPDNLSVSKSELHDLLSKTSLNGIPLLVLGNKIDKPGALSKEALTDEMGLKSLTDREVCCFMISCKNSTNIDQVIDWLVKHSKSSN.

The segment at residues 1 to 18 (MGLWDALLNWLRSLFFKQ) is an intramembrane region (note=Mediates targeting to membranes). Residues 29–34 (NAGKTS), 48–51 (MIPT), 70–74 (DLGGQ), and 129–132 (NKID) contribute to the GTP site.

Belongs to the small GTPase superfamily. Arf family. Interacts with tubulin.

The protein localises to the late endosome membrane. The protein resides in the lysosome membrane. It localises to the cytoplasm. Its subcellular location is the cytoskeleton. It is found in the spindle. May play a role in lysosome motility. May play a role in chromosome segregation. In terms of biological role, (Microbial infection) Component of tomato mosaic virus (ToMV) RNA replication complexes. Required for tobamovirus multiplication, especially for efficient negative-strand RNA synthesis and viral RNA capping. The polypeptide is ADP-ribosylation factor-like protein 8b (Arabidopsis thaliana (Mouse-ear cress)).